Consider the following 271-residue polypeptide: MENIKIIIASDSIGETAELVARACISQFNPKECKHEFLRYPYIETKEDIDEVIQVANDRNAIIVYTLVKPEMKTYMESKIGTNKLRSIDIMGPLMGYLKDAFEENPYNQPGRVHRLDDAYFKKIDAIEFAVKYDDGKDPKGLPKADIVLIGVSRTSKTPLSQYLAHKSYKVMNVPIVPEVTPPDMLFDIDSSKCIALRISEEKLNRIRKQRLKQLGLGDSARYANEIRIKEEIKYFEDIVDRIGCAVIDVSDKAIEETANDVINIIESQSK.

Position 151-158 (151-158 (GVSRTSKT)) interacts with ADP.

The protein belongs to the pyruvate, phosphate/water dikinase regulatory protein family. PDRP subfamily.

The enzyme catalyses N(tele)-phospho-L-histidyl/L-threonyl-[pyruvate, phosphate dikinase] + ADP = N(tele)-phospho-L-histidyl/O-phospho-L-threonyl-[pyruvate, phosphate dikinase] + AMP + H(+). It catalyses the reaction N(tele)-phospho-L-histidyl/O-phospho-L-threonyl-[pyruvate, phosphate dikinase] + phosphate + H(+) = N(tele)-phospho-L-histidyl/L-threonyl-[pyruvate, phosphate dikinase] + diphosphate. Its function is as follows. Bifunctional serine/threonine kinase and phosphorylase involved in the regulation of the pyruvate, phosphate dikinase (PPDK) by catalyzing its phosphorylation/dephosphorylation. The protein is Putative pyruvate, phosphate dikinase regulatory protein 2 of Staphylococcus haemolyticus (strain JCSC1435).